The sequence spans 156 residues: Small ribosomal subunit protein uS7 (156 aa).

Belongs to the universal ribosomal protein uS7 family. Part of the 30S ribosomal subunit. Contacts proteins S9 and S11.

One of the primary rRNA binding proteins, it binds directly to 16S rRNA where it nucleates assembly of the head domain of the 30S subunit. Is located at the subunit interface close to the decoding center, probably blocks exit of the E-site tRNA. This is Small ribosomal subunit protein uS7 from Mycobacterium ulcerans (strain Agy99).